The primary structure comprises 160 residues: Type IV major fimbrial protein FimA (160 aa).

A propeptide spans 1–7 (MKSLQKG) (leader sequence). N-methylphenylalanine is present on F8. The helical transmembrane segment at 8 to 28 (FTLIELMIVVAIIGILAAFAI) threads the bilayer. Cysteines 63 and 105 form a disulfide.

This sequence belongs to the N-Me-Phe pilin family. In terms of assembly, the pili are polar flexible filaments of about 5.4 nanometers diameter and 2.5 micrometers average length; they consist of only a single polypeptide chain arranged in a helical configuration of five subunits per turn in the assembled pilus.

It localises to the fimbrium. It is found in the membrane. In terms of biological role, major component of the type IV fimbriae that plays an essential role in twitching motility, natural transformation, and protease secretion. The protein is Type IV major fimbrial protein FimA (fimA) of Dichelobacter nodosus (Bacteroides nodosus).